Reading from the N-terminus, the 118-residue chain is MASQSQGIQQLLQAEKRAAEKVADARKRKARRLKQAKEEAQMEVELYRREREQEFQSKQQAAMGSQGNLSAEVEQATRRQVQGMQSSQQRNRERVLAQLLGMVCDVRPQVHPNYRIAV.

Ala2 bears the N-acetylalanine mark. The disordered stretch occupies residues 55 to 90 (FQSKQQAAMGSQGNLSAEVEQATRRQVQGMQSSQQR). Composition is skewed to polar residues over residues 56–69 (QSKQ…QGNL) and 78–89 (RRQVQGMQSSQQ).

This sequence belongs to the V-ATPase G subunit family. In terms of assembly, V-ATPase is a heteromultimeric enzyme made up of two complexes: the ATP-hydrolytic V1 complex and the proton translocation V0 complex. The V1 complex consists of three catalytic AB heterodimers that form a heterohexamer, three peripheral stalks each consisting of EG heterodimers, one central rotor including subunits D and F, and the regulatory subunits C and H. The proton translocation complex V0 consists of the proton transport subunit a, a ring of proteolipid subunits c9c'', rotary subunit d, subunits e and f, and the accessory subunits ATP6AP1/Ac45 and ATP6AP2/PRR.

It is found in the apical cell membrane. Functionally, subunit of the V1 complex of vacuolar(H+)-ATPase (V-ATPase), a multisubunit enzyme composed of a peripheral complex (V1) that hydrolyzes ATP and a membrane integral complex (V0) that translocates protons. V-ATPase is responsible for acidifying and maintaining the pH of intracellular compartments and in some cell types, is targeted to the plasma membrane, where it is responsible for acidifying the extracellular environment. In aerobic conditions, involved in intracellular iron homeostasis, thus triggering the activity of Fe(2+) prolyl hydroxylase (PHD) enzymes, and leading to HIF1A hydroxylation and subsequent proteasomal degradation. The chain is V-type proton ATPase subunit G 1 (ATP6V1G1) from Canis lupus familiaris (Dog).